A 138-amino-acid chain; its full sequence is Large ribosomal subunit protein uL16 (138 aa).

Over residues 1–17 the composition is skewed to basic residues; it reads MLQPKRTKFRKQHKGRN. The tract at residues 1–22 is disordered; sequence MLQPKRTKFRKQHKGRNRGVAT.

It belongs to the universal ribosomal protein uL16 family. In terms of assembly, part of the 50S ribosomal subunit.

Its function is as follows. Binds 23S rRNA and is also seen to make contacts with the A and possibly P site tRNAs. The protein is Large ribosomal subunit protein uL16 of Acidithiobacillus ferrooxidans (strain ATCC 23270 / DSM 14882 / CIP 104768 / NCIMB 8455) (Ferrobacillus ferrooxidans (strain ATCC 23270)).